Here is a 148-residue protein sequence, read N- to C-terminus: Receptor activity-modifying protein 1 (148 aa).

Residues 1-26 (MARALCRLPRRGLWLLLAHHLFMTTA) form the signal peptide. 3 cysteine pairs are disulfide-bonded: Cys-27–Cys-82, Cys-40–Cys-72, and Cys-57–Cys-104. Topologically, residues 27 to 118 (CQEANYGALL…RAVRDPPGSI (92 aa)) are extracellular. Residues 119-140 (LYPFIVVPITVTLLVTALVVWQ) traverse the membrane as a helical segment. The Cytoplasmic segment spans residues 141–148 (SKRTEGIV).

The protein belongs to the RAMP family. As to quaternary structure, heterodimer of CALCRL and RAMP1; the interaction induces allosteric modulation of CALCRL function and CGRP1/CALCA and CGRP2/CALCB ligand specificity. Heterodimer of CALCR and RAMP1; interaction forms the AMYR1 receptor complex for amylin/IAPP and CGRP1/CALCA ligands. Expressed in many tissues including the uterus, bladder, brain, pancreas and gastro-intestinal tract.

It localises to the cell membrane. Its function is as follows. Accessory protein that interacts with and modulates the function of G-protein coupled receptors including calcitonin gene-related peptide type 1 receptor (CALCRL) and calcitonin receptor (CALCR). Required for the transport of CALCRL to the plasma membrane. Together with CALCRL, form the receptor complex for the calcitonin gene-related peptides CGRP1/CALCA and CGRP2/CALCB. Together with CALCR, form the AMYR1 receptor complex for amylin/IAPP and CGRP1/CALCA. In Homo sapiens (Human), this protein is Receptor activity-modifying protein 1.